A 583-amino-acid chain; its full sequence is Membrane protein insertase YidC (583 aa).

A helical transmembrane segment spans residues 5 to 25 (SVTGLALIALIMIVWLQFMSP). A disordered region spans residues 28 to 50 (KSVQPDNRPKAQTTATVSQEKTE). A compositionally biased stretch (polar residues) spans 37 to 46 (KAQTTATVSQ). The next 5 membrane-spanning stretches (helical) occupy residues 341-361 (PFAE…ISNY), 362-382 (GLII…LSMA), 427-447 (LGGC…FYVF), 477-497 (IPVY…TVFI), and 515-535 (LYIF…GLGL).

This sequence belongs to the OXA1/ALB3/YidC family. Type 1 subfamily. In terms of assembly, interacts with the Sec translocase complex via SecD. Specifically interacts with transmembrane segments of nascent integral membrane proteins during membrane integration.

It is found in the cell inner membrane. Required for the insertion and/or proper folding and/or complex formation of integral membrane proteins into the membrane. Involved in integration of membrane proteins that insert both dependently and independently of the Sec translocase complex, as well as at least some lipoproteins. Aids folding of multispanning membrane proteins. This is Membrane protein insertase YidC from Chlorobium limicola (strain DSM 245 / NBRC 103803 / 6330).